A 217-amino-acid chain; its full sequence is Ras-related protein RABA2d (217 aa).

19 to 26 contributes to the GTP binding site; it reads GDSGVGKT. The Effector region signature appears at 41 to 49; it reads SKSTIGVEF. Residues 67–71, 125–128, and 155–156 each bind GTP; these read DTAGQ, NKAD, and SA. The tract at residues 196 to 217 is disordered; it reads GQGTTINVEDTSGAGKRGCCST. S-geranylgeranyl cysteine attachment occurs at residues C214 and C215.

It belongs to the small GTPase superfamily. Rab family. As to expression, expressed in root tips.

It is found in the endosome membrane. The protein resides in the golgi apparatus. It localises to the trans-Golgi network membrane. Intracellular vesicle trafficking and protein transport. The polypeptide is Ras-related protein RABA2d (RABA2D) (Arabidopsis thaliana (Mouse-ear cress)).